A 285-amino-acid chain; its full sequence is ENMTFGTTLVTNPKGGFLACGPLYAYKCGRLHYTTGVCSNVSSTFETVKAVAPSVQECKTQLDIVIVLDGSNSIYPWESVTAFLNSLLRNMDIGPQQTQVGIVQYGQTVVHEFYLNTYSTTEEVMDAALRIRQRGGTQTMTALGIDTAREEAFTEAHGARRGVQKVMVIVTDGESHDNYRLQEVIDKCEDENIQRFAIAILGSYSRGNLSTEKFVEEIKSIASKPTEKHFFNVSDELALVTIVEALGERIFALEATTDQQAASFEMEMSQAGFSAHYSQDWVMLG.

Over 1–285 the chain is Extracellular; that stretch reads ENMTFGTTLV…HYSQDWVMLG (285 aa). Residues Asn-2, Asn-40, Asn-208, and Asn-232 are each glycosylated (N-linked (GlcNAc...) asparagine). One can recognise a VWFA domain in the interval 66–279; the sequence is IVLDGSNSIY…QAGFSAHYSQ (214 aa).

This sequence belongs to the integrin alpha chain family. In terms of assembly, heterodimer of an alpha and a beta subunit. Alpha-1 associates with beta-1.

It is found in the membrane. Functionally, integrin alpha-1/beta-1 is a receptor for laminin and collagen. It recognizes the proline-hydroxylated sequence G-F-P-G-E-R in collagen. Involved in anchorage-dependent, negative regulation of EGF-stimulated cell growth. This is Integrin alpha-1 (ITGA1) from Gallus gallus (Chicken).